The chain runs to 455 residues: Serine incorporator 2 (455 aa).

Helical transmembrane passes span Leu-5–Ser-27, Leu-40–Leu-57, Ala-96–Val-118, Gly-131–Ile-150, Phe-160–Ala-182, Tyr-202–Phe-224, Phe-239–Leu-256, Leu-268–Pro-290, Gln-317–Leu-339, Thr-385–Thr-407, and Trp-422–Val-444.

This sequence belongs to the TDE1 family.

Its subcellular location is the cell membrane. It carries out the reaction a 1,2-diacyl-sn-glycero-3-phospho-L-serine(in) = a 1,2-diacyl-sn-glycero-3-phospho-L-serine(out). It catalyses the reaction a 1,2-diacyl-sn-glycero-3-phosphocholine(in) = a 1,2-diacyl-sn-glycero-3-phosphocholine(out). The catalysed reaction is a 1,2-diacyl-sn-glycero-3-phosphoethanolamine(in) = a 1,2-diacyl-sn-glycero-3-phosphoethanolamine(out). Its function is as follows. Non-ATP-dependent, non-specific lipid transporter for phosphatidylserine, phosphatidylcholine, and phosphatidylethanolamine. Functions as a scramblase that flips lipids in both directions across the membrane. In contrast to SERINC3 and SERINC5, has no effect on HIV-1 particles infectivity. The polypeptide is Serine incorporator 2 (Homo sapiens (Human)).